The chain runs to 144 residues: Protein NrdI (144 aa).

The protein belongs to the NrdI family.

Its function is as follows. Probably involved in ribonucleotide reductase function. This is Protein NrdI from Streptococcus pyogenes serotype M4 (strain MGAS10750).